The sequence spans 1024 residues: Seizure 6-like protein (1024 aa).

An N-terminal signal peptide occupies residues 1-28 (MPAARPPAAGLRGISLFLALLLGSPAAA). Residues 29–958 (LERDALPEGD…ETSLEGGNMA (930 aa)) lie on the Extracellular side of the membrane. Disordered regions lie at residues 33–77 (ALPE…SQSA), 108–184 (RPKH…EVPL), and 212–234 (AHTLPQRPEPGEPGPDMAQEAPQ). S49 carries an O-linked (GalNAc...) serine glycan. Residues 56 to 66 (SPGKEHPEERV) show a composition bias toward basic and acidic residues. Residues 110–120 (KHALPPKKKLP) show a composition bias toward basic residues. Polar residues predominate over residues 138–162 (SAATVQRAGSQPASQGLDLLSSSTE). 2 O-glycosylated at one site regions span residues 147 to 161 (SQPASQGLDLLSSST) and 176 to 180 (SEEAS). A disulfide bridge links C281 with C308. One can recognise a CUB 1 domain in the interval 281-389 (CSVSFSNPEG…GTFQLHYQAF (109 aa)). 3 N-linked (GlcNAc...) asparagine glycosylation sites follow: N311, N328, and N350. The Sushi 1 domain maps to 391-450 (LSCNFPRRPDSGDVTVMDLHSGGVAHFHCHLGYELQGAKMLTCINASKPHWSSQEPICSA). Intrachain disulfides connect C393/C433 and C419/C448. N-linked (GlcNAc...) asparagine glycosylation is found at N435, N458, N474, N514, N576, N618, N674, and N742. In terms of domain architecture, CUB 2 spans 452–562 (CGGAVHNATI…STFNIRFEAF (111 aa)). A Sushi 2 domain is found at 565-626 (GHCYEPYIQN…WNDTEPLCRA (62 aa)). 2 cysteine pairs are disulfide-bonded: C567-C609 and C594-C624. Residues 628-739 (CGGELSAVAG…QGFIMNYIEV (112 aa)) enclose the CUB 3 domain. Sushi domains follow at residues 743–802 (DSCS…FCEK), 804–867 (MYCT…HCVS), and 871–932 (LACD…VCKV). Disulfide bonds link C745/C787, C773/C800, C806/C848, C834/C865, C873/C915, and C901/C930. A helical transmembrane segment spans residues 959-979 (LAIFIPVLIISLLLGGAYIYI). The Cytoplasmic portion of the chain corresponds to 980–1024 (TRCRYYSNLRLPLMYSHPYSQITVETEFDNPIYETGETREYEVSI).

The protein belongs to the SEZ6 family. Post-translationally, O-glycosylated. As to expression, widely expressed, including adult and fetal brains and lungs. Not expressed in all lung cancer cell lines.

It is found in the endoplasmic reticulum membrane. In terms of biological role, may contribute to specialized endoplasmic reticulum functions in neurons. The polypeptide is Seizure 6-like protein (SEZ6L) (Homo sapiens (Human)).